Here is a 398-residue protein sequence, read N- to C-terminus: Nicotinate phosphoribosyltransferase (398 aa).

A Phosphohistidine; by autocatalysis modification is found at His222.

This sequence belongs to the NAPRTase family. Transiently phosphorylated on a His residue during the reaction cycle. Phosphorylation strongly increases the affinity for substrates and increases the rate of nicotinate D-ribonucleotide production. Dephosphorylation regenerates the low-affinity form of the enzyme, leading to product release.

It carries out the reaction nicotinate + 5-phospho-alpha-D-ribose 1-diphosphate + ATP + H2O = nicotinate beta-D-ribonucleotide + ADP + phosphate + diphosphate. Its pathway is cofactor biosynthesis; NAD(+) biosynthesis; nicotinate D-ribonucleotide from nicotinate: step 1/1. Catalyzes the synthesis of beta-nicotinate D-ribonucleotide from nicotinate and 5-phospho-D-ribose 1-phosphate at the expense of ATP. This chain is Nicotinate phosphoribosyltransferase, found in Acidovorax ebreus (strain TPSY) (Diaphorobacter sp. (strain TPSY)).